The following is a 106-amino-acid chain: uncharacterized protein (106 aa).

An N-terminal signal peptide occupies residues 1–27 (MHHFVPSISLFMASVSFSVFFSHLATS). The chain crosses the membrane as a helical span at residues 42-62 (TLFSMVPLINSSFNLSVFLFF).

It is found in the membrane. This is an uncharacterized protein from Saccharomyces cerevisiae (strain ATCC 204508 / S288c) (Baker's yeast).